The primary structure comprises 136 residues: Large ribosomal subunit protein uL16 (136 aa).

Belongs to the universal ribosomal protein uL16 family. In terms of assembly, part of the 50S ribosomal subunit.

Functionally, binds 23S rRNA and is also seen to make contacts with the A and possibly P site tRNAs. This chain is Large ribosomal subunit protein uL16, found in Orientia tsutsugamushi (strain Boryong) (Rickettsia tsutsugamushi).